A 234-amino-acid polypeptide reads, in one-letter code: Phosphoribosylaminoimidazole-succinocarboxamide synthase (234 aa).

It belongs to the SAICAR synthetase family.

It carries out the reaction 5-amino-1-(5-phospho-D-ribosyl)imidazole-4-carboxylate + L-aspartate + ATP = (2S)-2-[5-amino-1-(5-phospho-beta-D-ribosyl)imidazole-4-carboxamido]succinate + ADP + phosphate + 2 H(+). It functions in the pathway purine metabolism; IMP biosynthesis via de novo pathway; 5-amino-1-(5-phospho-D-ribosyl)imidazole-4-carboxamide from 5-amino-1-(5-phospho-D-ribosyl)imidazole-4-carboxylate: step 1/2. The polypeptide is Phosphoribosylaminoimidazole-succinocarboxamide synthase (Streptococcus pyogenes serotype M18 (strain MGAS8232)).